A 276-amino-acid chain; its full sequence is Small ribosomal subunit protein uS3 (276 aa).

The KH type-2 domain occupies 43 to 111 (IRQLMSTGME…QVQLNILEVK (69 aa)). A compositionally biased stretch (low complexity) spans 218–227 (AQAASAPSRG). Residues 218 to 276 (AQAASAPSRGPRSDRGGRPGGADRGDRRRRNDRPAADAAPAAEAPAVEAAPAAAEGGQA) form a disordered region. The segment covering 228-243 (PRSDRGGRPGGADRGD) has biased composition (basic and acidic residues). The span at 253–276 (ADAAPAAEAPAVEAAPAAAEGGQA) shows a compositional bias: low complexity.

It belongs to the universal ribosomal protein uS3 family. In terms of assembly, part of the 30S ribosomal subunit. Forms a tight complex with proteins S10 and S14.

In terms of biological role, binds the lower part of the 30S subunit head. Binds mRNA in the 70S ribosome, positioning it for translation. This chain is Small ribosomal subunit protein uS3, found in Pseudarthrobacter chlorophenolicus (strain ATCC 700700 / DSM 12829 / CIP 107037 / JCM 12360 / KCTC 9906 / NCIMB 13794 / A6) (Arthrobacter chlorophenolicus).